Here is a 548-residue protein sequence, read N- to C-terminus: Chaperonin GroEL (548 aa).

Residues 30–33 (TLGP), Lys-51, 87–91 (DGTTT), Gly-415, 479–481 (NAA), and Asp-495 contribute to the ATP site.

Belongs to the chaperonin (HSP60) family. As to quaternary structure, forms a cylinder of 14 subunits composed of two heptameric rings stacked back-to-back. Interacts with the co-chaperonin GroES.

It localises to the cytoplasm. It carries out the reaction ATP + H2O + a folded polypeptide = ADP + phosphate + an unfolded polypeptide.. In terms of biological role, together with its co-chaperonin GroES, plays an essential role in assisting protein folding. The GroEL-GroES system forms a nano-cage that allows encapsulation of the non-native substrate proteins and provides a physical environment optimized to promote and accelerate protein folding. The chain is Chaperonin GroEL from Klebsiella pneumoniae (strain 342).